A 295-amino-acid chain; its full sequence is Ribosomal protein L11 methyltransferase (295 aa).

Positions 146, 167, 189, and 231 each coordinate S-adenosyl-L-methionine.

Belongs to the methyltransferase superfamily. PrmA family.

The protein resides in the cytoplasm. The enzyme catalyses L-lysyl-[protein] + 3 S-adenosyl-L-methionine = N(6),N(6),N(6)-trimethyl-L-lysyl-[protein] + 3 S-adenosyl-L-homocysteine + 3 H(+). Functionally, methylates ribosomal protein L11. The polypeptide is Ribosomal protein L11 methyltransferase (Vibrio vulnificus (strain CMCP6)).